Here is a 549-residue protein sequence, read N- to C-terminus: Hydroxylamine reductase (549 aa).

Positions 5, 8, 17, and 23 each coordinate [4Fe-4S] cluster. The hybrid [4Fe-2O-2S] cluster site is built by His242, Glu266, Cys310, Cys402, Cys430, Cys455, Glu490, and Lys492. Cys402 bears the Cysteine persulfide mark.

This sequence belongs to the HCP family. [4Fe-4S] cluster is required as a cofactor. It depends on hybrid [4Fe-2O-2S] cluster as a cofactor.

The protein localises to the cytoplasm. The catalysed reaction is A + NH4(+) + H2O = hydroxylamine + AH2 + H(+). Catalyzes the reduction of hydroxylamine to form NH(3) and H(2)O. The sequence is that of Hydroxylamine reductase from Clostridium novyi (strain NT).